We begin with the raw amino-acid sequence, 142 residues long: Transcriptional regulator MraZ (142 aa).

SpoVT-AbrB domains are found at residues 5–51 (ASAL…PRPE) and 77–120 (AMDV…DSQT).

Belongs to the MraZ family. In terms of assembly, forms oligomers.

The protein resides in the cytoplasm. It localises to the nucleoid. This Burkholderia cenocepacia (strain ATCC BAA-245 / DSM 16553 / LMG 16656 / NCTC 13227 / J2315 / CF5610) (Burkholderia cepacia (strain J2315)) protein is Transcriptional regulator MraZ.